We begin with the raw amino-acid sequence, 368 residues long: PPE family immunomodulator PPE68 (368 aa).

2 disordered regions span residues 255–280 (LGTSPLSNHPLAGGSGPSAGAGLLRA) and 312–368 (AAAG…EDDW). Positions 312 to 327 (AAAGSSATGGAAPVGA) are enriched in low complexity. Positions 354-368 (REEDDEDDWDEEDDW) are enriched in acidic residues.

Belongs to the mycobacterial PPE family. As to quaternary structure, homodimer. Interacts with PE35. PE35/PPE68 complex interacts with human TLR2.

The protein localises to the secreted. The protein resides in the cell wall. Its subcellular location is the cell membrane. It is found in the cell surface. In terms of biological role, plays a major role in RD1-associated pathogenesis, and may contribute to the establishment and maintenance of M.tuberculosis infection. Together with PE35, stimulates the secretion of IL-10 and MCP-1 from human macrophages, via the interaction with human Toll-like receptor 2 (TLR2). This chain is PPE family immunomodulator PPE68 (PPE68), found in Mycobacterium tuberculosis (strain CDC 1551 / Oshkosh).